An 80-amino-acid polypeptide reads, in one-letter code: Putative membrane protein insertion efficiency factor (80 aa).

The interval 61–80 (KTGKDPVPDHFSLKRNQEGE) is disordered. Over residues 62–80 (TGKDPVPDHFSLKRNQEGE) the composition is skewed to basic and acidic residues.

It belongs to the UPF0161 family.

It localises to the cell membrane. In terms of biological role, could be involved in insertion of integral membrane proteins into the membrane. The sequence is that of Putative membrane protein insertion efficiency factor from Streptococcus pneumoniae (strain 70585).